The primary structure comprises 125 residues: Small ribosomal subunit protein uS13 (125 aa).

It belongs to the universal ribosomal protein uS13 family. Part of the 30S ribosomal subunit. Forms a loose heterodimer with protein S19. Forms two bridges to the 50S subunit in the 70S ribosome.

Functionally, located at the top of the head of the 30S subunit, it contacts several helices of the 16S rRNA. In the 70S ribosome it contacts the 23S rRNA (bridge B1a) and protein L5 of the 50S subunit (bridge B1b), connecting the 2 subunits; these bridges are implicated in subunit movement. Contacts the tRNAs in the A and P-sites. The polypeptide is Small ribosomal subunit protein uS13 (Granulibacter bethesdensis (strain ATCC BAA-1260 / CGDNIH1)).